The sequence spans 583 residues: Chitinase 2 (583 aa).

The first 19 residues, 1-19, serve as a signal peptide directing secretion; that stretch reads MLSFKSLLAAAVVASSALA. The region spanning 23 to 305 is the GH18 domain; sequence NQVALYWGQN…VQVKNVLNQN (283 aa). Glutamate 153 (proton donor) is an active-site residue. 3 N-linked (GlcNAc...) asparagine glycosylation sites follow: asparagine 370, asparagine 546, and asparagine 549. A lipid anchor (GPI-anchor amidated glycine) is attached at glycine 560. A propeptide spans 561 to 583 (removed in mature form); sequence AAVANSLNSVWFTVPFLLAAFAF.

Belongs to the glycosyl hydrolase 18 family. Chitinase class III subfamily. The GPI-anchor is attached to the protein in the endoplasmic reticulum and serves to target the protein to the cell surface. There, the glucosamine-inositol phospholipid moiety is cleaved off and the GPI-modified mannoprotein is covalently attached via its lipidless GPI glycan remnant to the 1,6-beta-glucan of the outer cell wall layer. Post-translationally, proteolytic cleavage by SAP9 and SAP10 leads to the cell wall release of CHT2 and increased chitinase activity, suggesting a direct influence of SAP9 and SAP10 on CHT2 function.

The protein localises to the secreted. It is found in the cell wall. The protein resides in the membrane. It carries out the reaction Random endo-hydrolysis of N-acetyl-beta-D-glucosaminide (1-&gt;4)-beta-linkages in chitin and chitodextrins.. Its function is as follows. Chitinase involved in the remodeling of chitin in the fungal cell wall. Plays a role in cell separation. This is Chitinase 2 (CHT2) from Candida albicans (strain SC5314 / ATCC MYA-2876) (Yeast).